The sequence spans 210 residues: Glutathione S-transferase P (210 aa).

A GST N-terminal domain is found at 2-81; sequence ASYTIVYFPV…HLGRTLGLYG (80 aa). Tyr4 carries the post-translational modification Phosphotyrosine; by EGFR. Residues Tyr8, Arg14, Trp39, Lys45, and 52–53 each bind glutathione; that span reads QL. Thr62 is modified (phosphothreonine). 65 to 66 provides a ligand contact to glutathione; that stretch reads QS. Positions 83–204 constitute a GST C-terminal domain; the sequence is DQREAALVDM…ASPEHVNRPI (122 aa). 2 positions are modified to N6-succinyllysine: Lys103 and Lys116. Lys128 carries the post-translational modification N6-acetyllysine.

Belongs to the GST superfamily. Pi family. In terms of assembly, homodimer. Interacts with CDK5.

Its subcellular location is the cytoplasm. It localises to the mitochondrion. It is found in the nucleus. The catalysed reaction is RX + glutathione = an S-substituted glutathione + a halide anion + H(+). It carries out the reaction prostaglandin J2 + glutathione = prostaglandin J2-S-(R)-glutathione. It catalyses the reaction prostaglandin J2 + glutathione = prostaglandin J2-S-(S)-glutathione. The enzyme catalyses prostaglandin A2 + glutathione = prostaglandin A2-S-(S)-glutathione. The catalysed reaction is 11(S)-hydroxy-14(S),15(S)-epoxy-(5Z,8Z,12E)-eicosatrienoate + glutathione = (11S,15S)-dihydroxy-14(R)-S-glutathionyl-(5Z,8Z,12E)-eicosatrienoate. Functionally, conjugation of reduced glutathione to a wide number of exogenous and endogenous hydrophobic electrophiles. Involved in the formation of glutathione conjugates of both prostaglandin A2 (PGA2) and prostaglandin J2 (PGJ2). Participates in the formation of novel hepoxilin regioisomers. Negatively regulates CDK5 activity via p25/p35 translocation to prevent neurodegeneration. The polypeptide is Glutathione S-transferase P (GSTP1) (Capra hircus (Goat)).